A 345-amino-acid chain; its full sequence is Photosystem II protein D1 (345 aa).

3 helical membrane-spanning segments follow: residues 30–47, 119–134, and 143–157; these read YVGW…TAAT, HFFI…EWEL, and WIAV…AASA. Position 119 (H119) interacts with chlorophyll a. Y127 provides a ligand contact to pheophytin a. [CaMn4O5] cluster is bound by residues D171 and E190. The helical transmembrane segment at 198 to 219 threads the bilayer; the sequence is FHMLGVAGVFGGSLFSAMHGSL. H199 lines the chlorophyll a pocket. A quinone contacts are provided by residues H216 and 265 to 266; that span reads SF. H216 contacts Fe cation. H273 is a Fe cation binding site. A helical membrane pass occupies residues 275–289; it reads FLAVWPVVGIWFTAL. [CaMn4O5] cluster is bound by residues H333, E334, D343, and A345.

The protein belongs to the reaction center PufL/M/PsbA/D family. In terms of assembly, PSII is composed of 1 copy each of membrane proteins PsbA, PsbB, PsbC, PsbD, PsbE, PsbF, PsbH, PsbI, PsbJ, PsbK, PsbL, PsbM, PsbT, PsbY, PsbZ, Psb30/Ycf12, at least 3 peripheral proteins of the oxygen-evolving complex and a large number of cofactors. It forms dimeric complexes. Requires The D1/D2 heterodimer binds P680, chlorophylls that are the primary electron donor of PSII, and subsequent electron acceptors. It shares a non-heme iron and each subunit binds pheophytin, quinone, additional chlorophylls, carotenoids and lipids. D1 provides most of the ligands for the Mn4-Ca-O5 cluster of the oxygen-evolving complex (OEC). There is also a Cl(-1) ion associated with D1 and D2, which is required for oxygen evolution. The PSII complex binds additional chlorophylls, carotenoids and specific lipids. as cofactor. Tyr-162 forms a radical intermediate that is referred to as redox-active TyrZ, YZ or Y-Z.

The protein resides in the plastid. It is found in the chloroplast thylakoid membrane. It carries out the reaction 2 a plastoquinone + 4 hnu + 2 H2O = 2 a plastoquinol + O2. Functionally, photosystem II (PSII) is a light-driven water:plastoquinone oxidoreductase that uses light energy to abstract electrons from H(2)O, generating O(2) and a proton gradient subsequently used for ATP formation. It consists of a core antenna complex that captures photons, and an electron transfer chain that converts photonic excitation into a charge separation. The D1/D2 (PsbA/PsbD) reaction center heterodimer binds P680, the primary electron donor of PSII as well as several subsequent electron acceptors. The sequence is that of Photosystem II protein D1 from Euglena gracilis.